A 108-amino-acid polypeptide reads, in one-letter code: Phosphoribosyl-ATP pyrophosphatase (108 aa).

The protein belongs to the PRA-PH family.

Its subcellular location is the cytoplasm. The enzyme catalyses 1-(5-phospho-beta-D-ribosyl)-ATP + H2O = 1-(5-phospho-beta-D-ribosyl)-5'-AMP + diphosphate + H(+). It participates in amino-acid biosynthesis; L-histidine biosynthesis; L-histidine from 5-phospho-alpha-D-ribose 1-diphosphate: step 2/9. This chain is Phosphoribosyl-ATP pyrophosphatase, found in Thiobacillus denitrificans (strain ATCC 25259 / T1).